The sequence spans 330 residues: Aspartate--ammonia ligase (330 aa).

The protein belongs to the class-II aminoacyl-tRNA synthetase family. AsnA subfamily.

It is found in the cytoplasm. The enzyme catalyses L-aspartate + NH4(+) + ATP = L-asparagine + AMP + diphosphate + H(+). The protein operates within amino-acid biosynthesis; L-asparagine biosynthesis; L-asparagine from L-aspartate (ammonia route): step 1/1. This chain is Aspartate--ammonia ligase, found in Streptococcus agalactiae serotype III (strain NEM316).